The following is a 57-amino-acid chain: MAVPKKRTSISKKRIRKNFWKKKGYFAAVKAFSLAKSVSTGQSKSFFVRQTSNKSLE.

It belongs to the bacterial ribosomal protein bL32 family.

Its subcellular location is the plastid. The protein localises to the chloroplast. In Acorus calamus (Sweet flag), this protein is Large ribosomal subunit protein bL32c.